A 292-amino-acid polypeptide reads, in one-letter code: Small ribosomal subunit biogenesis GTPase RsgA (292 aa).

The 152-residue stretch at 62-213 (KNSLVRPPIV…IADTPGFSSL (152 aa)) folds into the CP-type G domain. GTP-binding positions include 111 to 114 (SKMD) and 156 to 164 (GQTGVGKST). Zn(2+) is bound by residues cysteine 237, cysteine 242, histidine 244, and cysteine 250.

This sequence belongs to the TRAFAC class YlqF/YawG GTPase family. RsgA subfamily. In terms of assembly, monomer. Associates with 30S ribosomal subunit, binds 16S rRNA. Zn(2+) serves as cofactor.

The protein resides in the cytoplasm. In terms of biological role, one of several proteins that assist in the late maturation steps of the functional core of the 30S ribosomal subunit. Helps release RbfA from mature subunits. May play a role in the assembly of ribosomal proteins into the subunit. Circularly permuted GTPase that catalyzes slow GTP hydrolysis, GTPase activity is stimulated by the 30S ribosomal subunit. The polypeptide is Small ribosomal subunit biogenesis GTPase RsgA (Streptococcus pneumoniae serotype 4 (strain ATCC BAA-334 / TIGR4)).